Reading from the N-terminus, the 349-residue chain is Protein-glutamate methylesterase/protein-glutamine glutaminase (349 aa).

A Response regulatory domain is found at 5–122 (RVLSVDDSAL…REGMLAYSEM (118 aa)). Residue aspartate 56 is modified to 4-aspartylphosphate. The 193-residue stretch at 152 to 344 (LLSSEKLIAI…QQMLAKISAG (193 aa)) folds into the CheB-type methylesterase domain. Active-site residues include serine 164, histidine 190, and aspartate 286.

Belongs to the CheB family. Post-translationally, phosphorylated by CheA. Phosphorylation of the N-terminal regulatory domain activates the methylesterase activity.

It localises to the cytoplasm. The enzyme catalyses [protein]-L-glutamate 5-O-methyl ester + H2O = L-glutamyl-[protein] + methanol + H(+). It carries out the reaction L-glutaminyl-[protein] + H2O = L-glutamyl-[protein] + NH4(+). Functionally, involved in chemotaxis. Part of a chemotaxis signal transduction system that modulates chemotaxis in response to various stimuli. Catalyzes the demethylation of specific methylglutamate residues introduced into the chemoreceptors (methyl-accepting chemotaxis proteins or MCP) by CheR. Also mediates the irreversible deamidation of specific glutamine residues to glutamic acid. The protein is Protein-glutamate methylesterase/protein-glutamine glutaminase of Escherichia coli O6:K15:H31 (strain 536 / UPEC).